The sequence spans 302 residues: 4-hydroxy-tetrahydrodipicolinate synthase (302 aa).

Thr49 provides a ligand contact to pyruvate. Tyr137 serves as the catalytic Proton donor/acceptor. Lys166 functions as the Schiff-base intermediate with substrate in the catalytic mechanism. Ile208 provides a ligand contact to pyruvate.

Belongs to the DapA family. In terms of assembly, homotetramer; dimer of dimers.

It localises to the cytoplasm. The catalysed reaction is L-aspartate 4-semialdehyde + pyruvate = (2S,4S)-4-hydroxy-2,3,4,5-tetrahydrodipicolinate + H2O + H(+). Its pathway is amino-acid biosynthesis; L-lysine biosynthesis via DAP pathway; (S)-tetrahydrodipicolinate from L-aspartate: step 3/4. Its function is as follows. Catalyzes the condensation of (S)-aspartate-beta-semialdehyde [(S)-ASA] and pyruvate to 4-hydroxy-tetrahydrodipicolinate (HTPA). The polypeptide is 4-hydroxy-tetrahydrodipicolinate synthase (Chloroherpeton thalassium (strain ATCC 35110 / GB-78)).